The primary structure comprises 287 residues: Bifunctional protein FolD (287 aa).

Residues 171 to 173 and Ile237 contribute to the NADP(+) site; that span reads GHS.

Belongs to the tetrahydrofolate dehydrogenase/cyclohydrolase family. As to quaternary structure, homodimer.

It carries out the reaction (6R)-5,10-methylene-5,6,7,8-tetrahydrofolate + NADP(+) = (6R)-5,10-methenyltetrahydrofolate + NADPH. The enzyme catalyses (6R)-5,10-methenyltetrahydrofolate + H2O = (6R)-10-formyltetrahydrofolate + H(+). It functions in the pathway one-carbon metabolism; tetrahydrofolate interconversion. Catalyzes the oxidation of 5,10-methylenetetrahydrofolate to 5,10-methenyltetrahydrofolate and then the hydrolysis of 5,10-methenyltetrahydrofolate to 10-formyltetrahydrofolate. This is Bifunctional protein FolD from Methanosarcina barkeri (strain Fusaro / DSM 804).